A 250-amino-acid polypeptide reads, in one-letter code: MGNLKTLLESRFKKNTPTKMEALARKRMEGDPSPLAVRLSNPTLSSKEKEQLRHLLQHYNFREQIEEPDLTQLCTLSAEVKQIHHQSVLLHGERITKVRDLLKSYREGAFSSWLLLTYGNRQTPYNFLVYYELFTLLPEPLKIEMEKMPRQAVYTLASRQGPQEKKEEIIRNYRGERKSELLDRIRKEFPLVETDCRKTSPVKQALAMLTKGSQILTKCTSLSSDEQIILEKLIKKLEKVKSNLFPDTKV.

Belongs to the UPF0137 (pGP6-D) family.

This is Virulence plasmid protein pGP6-D-related protein from Chlamydia pneumoniae (Chlamydophila pneumoniae).